Reading from the N-terminus, the 244-residue chain is RNA transcription, translation and transport factor protein (244 aa).

K20, K62, and K98 each carry N6-acetyllysine.

Belongs to the RTRAF family. Homodimer. Interacts with FAM98A (via N- and C-terminus). Interacts with NIN; which may prevent phosphorylation of NIN. Interacts with POLR2A. Component of a tRNA-splicing ligase complex with FAM98B, DDX1 and RTCB. As to quaternary structure, (Microbial infection) Interacts with influenza A virus (IAV) RNA polymerase subunits PA, PB1 and PB2, and nucleocapsid NP. Associates with IAV polymerase complexes both in the nucleus and cytosol. Associates with IAV ribonucleoproteins (vRNP) packaged in virions. Interacts with hepatitis C virus core protein p19. As to expression, widely expressed. Expressed at high level in heart and skeletal muscle. Expressed at intermediate level in liver, pancreas, fetal brain and fetal lung. Weakly expressed in adult brain, adult lung, placenta, fetal liver and fetal kidney. Overexpressed in many brain tumors.

It is found in the nucleus. Its subcellular location is the cytoplasm. The protein localises to the cytosol. It localises to the perinuclear region. The protein resides in the cytoskeleton. It is found in the microtubule organizing center. Its subcellular location is the centrosome. RNA-binding protein involved in modulation of mRNA transcription by Polymerase II. Component of the tRNA-splicing ligase complex and is required for tRNA ligation. May be required for RNA transport. Functionally, (Microbial infection) In case of infection by influenza virus A (IVA), is involved in viral replication. The polypeptide is RNA transcription, translation and transport factor protein (Homo sapiens (Human)).